An 886-amino-acid chain; its full sequence is Alanine--tRNA ligase (886 aa).

Residues His564, His568, Cys676, and His680 each contribute to the Zn(2+) site.

The protein belongs to the class-II aminoacyl-tRNA synthetase family. Zn(2+) serves as cofactor.

The protein resides in the cytoplasm. The enzyme catalyses tRNA(Ala) + L-alanine + ATP = L-alanyl-tRNA(Ala) + AMP + diphosphate. Functionally, catalyzes the attachment of alanine to tRNA(Ala) in a two-step reaction: alanine is first activated by ATP to form Ala-AMP and then transferred to the acceptor end of tRNA(Ala). Also edits incorrectly charged Ser-tRNA(Ala) and Gly-tRNA(Ala) via its editing domain. In Bartonella bacilliformis (strain ATCC 35685 / KC583 / Herrer 020/F12,63), this protein is Alanine--tRNA ligase.